The sequence spans 58 residues: U11-myrmicitoxin-Tb1a (58 aa).

The propeptide occupies 1–24 (LAMAMGDAVADAQARAMAAAYAIA). A disulfide bond links Cys-34 and Cys-57.

The protein belongs to the formicidae venom precursor-01 superfamily. As to expression, expressed by the venom gland.

Its subcellular location is the secreted. The protein resides in the target cell membrane. Neurotoxin that causes irreversible rapid flaccid paralysis in blowflies and honeybees upon intrathoracic injection. Causes a quick and irreversible cytolytic effect (at 10 uM) indicating it possibly acts as a pore-forming peptide. Shows only weak effect on aphids (A.pisum) at high doses 24 hours post intrathoracic injection. In vitro, is not cytotoxic on the dipteran S2 Drosophila embryonic cell line. The chain is U11-myrmicitoxin-Tb1a from Tetramorium bicarinatum (Tramp ant).